The chain runs to 679 residues: Recombination repair protein 1 (679 aa).

Residues 1 to 407 form a disordered region; sequence MPRVKAVKKQ…TKKAKKAETK (407 aa). The span at 45–55 shows a compositional bias: basic residues; it reads AKGKPRARKAT. The segment covering 106–116 has biased composition (basic and acidic residues); the sequence is ATAEAEPEPKV. A phosphothreonine mark is found at threonine 133 and threonine 140. At serine 142 the chain carries Phosphoserine. 2 stretches are compositionally biased toward basic and acidic residues: residues 179-189 and 203-214; these read EPPKQRARKEA and SKEKVQKAETAA. Residue serine 258 is modified to Phosphoserine. Basic and acidic residues predominate over residues 312-347; the sequence is KKEGKEPAPGKKQKKSADKENGVVEEEAKPSTETKP. The AP endonuclease stretch occupies residues 428 to 679; that stretch reads KICSWNVAGL…HCPITIFFNI (252 aa). Residue glutamate 461 coordinates Mg(2+). Tyrosine 533 is an active-site residue. Mg(2+)-binding residues include aspartate 572, asparagine 574, and aspartate 669. The Proton donor/acceptor role is filled by aspartate 572.

The protein belongs to the DNA repair enzymes AP/ExoA family. As to quaternary structure, interacts with the zeta DNA polymerase complex; interacts (via the N-terminus) with the accessory subunit PolZ2/Rev7 and also interacts with the catalytic component PolZ1, however the interaction with PolZ1 is likely via PolZ2. Mg(2+) is required as a cofactor. It depends on Mn(2+) as a cofactor.

It localises to the nucleus. The catalysed reaction is Exonucleolytic cleavage in the 3'- to 5'-direction to yield nucleoside 5'-phosphates.. Its function is as follows. Plays a role in the cellular response to oxidative stress by promoting DNA repair mechanisms such as base excision repair and possibly homologous recombination repair. Functions as an apurinic/apyrimidinic (AP) endodeoxyribonuclease in the DNA base excision repair (BER) pathway of DNA lesions induced by oxidative and alkylating agents. Likely to initiate repair of AP sites in DNA by catalyzing hydrolytic incision of the phosphodiester backbone immediately adjacent to the damage, generating a single-strand break with 5'-deoxyribose phosphate and 3'-hydroxyl ends. Has a 3'-5' exoribonuclease activity on mismatched deoxyribonucleotides at the 3' termini of nicked or gapped DNA molecules during short-patch BER. Has apurinic endonuclease and double-stranded DNA 3'-exonuclease activities and carries out single-stranded DNA renaturation in a Mg(2+)-dependent manner. Activity is more efficient in purine-rich regions of dsDNA than in pyrimidine-rich regions. This Drosophila melanogaster (Fruit fly) protein is Recombination repair protein 1.